The following is a 349-amino-acid chain: MGCFNSKEAGAGRPKTTTQQQQQATPEPTVTTAEVRADEKISMDQDISQGNVEDFYVVGKELGRGAFSVVREGTRKTTSDKVALKYIEKKFVKKKHIEQLRREIDIMKKVKHENVLSLKEIFESDSHLTLVMELVTGGELFYKIVERGSFTEKGARNVVRQVCAGVEYLHSQGIAHRDLKPENLLCNGEGEDMTIKIADFGLSKIFGTGEALETSCGTPDYVAPEVLTGGSYDNAVDMWSIGVITYILLCGFPPFYASSQNLLFEKILTADYDFPEPEWTHVSEHAKAFIRNLIVKDPDQRHTAKQCLDDLWLSGSDQSIGSAADLHSHFAEKMKKYNDQRRGGQSSNN.

Residues 1-33 (MGCFNSKEAGAGRPKTTTQQQQQATPEPTVTTA) are disordered. Residues 16–33 (TTTQQQQQATPEPTVTTA) are compositionally biased toward low complexity. Residues 56–313 (YVVGKELGRG…AKQCLDDLWL (258 aa)) enclose the Protein kinase domain. Residues 62 to 70 (LGRGAFSVV) and lysine 85 contribute to the ATP site. Catalysis depends on aspartate 178, which acts as the Proton acceptor.

The protein belongs to the protein kinase superfamily. CAMK Ser/Thr protein kinase family. CaMK subfamily.

It catalyses the reaction L-seryl-[myosin light chain] + ATP = O-phospho-L-seryl-[myosin light chain] + ADP + H(+). The enzyme catalyses L-threonyl-[myosin light chain] + ATP = O-phospho-L-threonyl-[myosin light chain] + ADP + H(+). Its activity is regulated as follows. Does not have a calmodulin-binding domain. Its function is as follows. May phosphorylate a specific serine in the N-terminus of a myosin light chain. This Dictyostelium discoideum (Social amoeba) protein is Probable myosin light chain kinase DDB_G0275057.